Here is a 771-residue protein sequence, read N- to C-terminus: Ribonucleoside-diphosphate reductase large subunit (771 aa).

An ATP-cone domain is found at 1-92 (MFVIKRNGYK…ISNLHKETKK (92 aa)). Residues 5 to 6 (KR), 11 to 17 (ENVMFDK), threonine 53, aspartate 57, and lysine 88 contribute to the ATP site. Residues serine 202 and serine 217 each coordinate GDP. DTTP contacts are provided by residues 226–228 (DSI), lysine 243, and arginine 256. Asparagine 427 is a binding site for GDP. Asparagine 427 acts as the Proton acceptor in catalysis. Residue cysteine 429 is the Cysteine radical intermediate of the active site. GDP is bound by residues glutamate 431 and 603–606 (TAST). The active-site Proton acceptor is glutamate 431.

Belongs to the ribonucleoside diphosphate reductase large chain family. In terms of assembly, interacts with RNR2/OPG047 subunit. The cofactor is Mg(2+).

It carries out the reaction a 2'-deoxyribonucleoside 5'-diphosphate + [thioredoxin]-disulfide + H2O = a ribonucleoside 5'-diphosphate + [thioredoxin]-dithiol. In terms of biological role, ribonucleoside-diphosphate reductase holoenzyme provides the precursors necessary for viral DNA synthesis. Allows virus growth in non-dividing cells. Catalyzes the biosynthesis of deoxyribonucleotides from the corresponding ribonucleotides. The protein is Ribonucleoside-diphosphate reductase large subunit (OPG080) of Monkeypox virus.